The sequence spans 352 residues: Isoflavone-7-O-methyltransferase 9 (352 aa).

Residue 118–127 (VLDPTLSGSY) coordinates substrate. S-adenosyl-L-methionine is bound by residues Gly196, Asp219, Asp239, Met240, and Lys253. The active-site Proton acceptor is the His257.

Belongs to the class I-like SAM-binding methyltransferase superfamily. Cation-independent O-methyltransferase family. COMT subfamily. As to quaternary structure, homodimer.

It carries out the reaction a 7-hydroxyisoflavone + S-adenosyl-L-methionine = a 7-methoxyisoflavone + S-adenosyl-L-homocysteine + H(+). It participates in phytoalexin biosynthesis; medicarpin biosynthesis. Functionally, transfers a methyl group to 7-hydroxyls of the isoflavones daidzein, genistein and 6,7,4'-trihydroxyisoflavone. Can also methylate (+)6a-hydroxymaackiain with lower efficiency. This chain is Isoflavone-7-O-methyltransferase 9, found in Medicago sativa (Alfalfa).